Consider the following 152-residue polypeptide: Small ribosomal subunit protein uS11 (152 aa).

The segment at 133 to 152 is disordered; that stretch reads VTPIPTDSTRRKSGHRGRRL. Residues 143–152 are compositionally biased toward basic residues; that stretch reads RKSGHRGRRL.

It belongs to the universal ribosomal protein uS11 family. As to quaternary structure, component of the small ribosomal subunit. Part of the small subunit (SSU) processome, composed of more than 70 proteins and the RNA chaperone small nucleolar RNA (snoRNA) U3.

It localises to the cytoplasm. The protein resides in the nucleus. Its subcellular location is the nucleolus. Its function is as follows. Component of the small ribosomal subunit. The ribosome is a large ribonucleoprotein complex responsible for the synthesis of proteins in the cell. Part of the small subunit (SSU) processome, first precursor of the small eukaryotic ribosomal subunit. During the assembly of the SSU processome in the nucleolus, many ribosome biogenesis factors, an RNA chaperone and ribosomal proteins associate with the nascent pre-rRNA and work in concert to generate RNA folding, modifications, rearrangements and cleavage as well as targeted degradation of pre-ribosomal RNA by the RNA exosome. The sequence is that of Small ribosomal subunit protein uS11 (rps14) from Dictyostelium discoideum (Social amoeba).